Here is a 242-residue protein sequence, read N- to C-terminus: Succinyl-CoA:3-ketoacid coenzyme A transferase subunit A (242 aa).

Residue 33–39 (GGFGLCG) participates in CoA binding.

It belongs to the 3-oxoacid CoA-transferase subunit A family. As to quaternary structure, heterodimer of a subunit A and a subunit B.

It carries out the reaction a 3-oxo acid + succinyl-CoA = a 3-oxoacyl-CoA + succinate. The protein operates within bacterial outer membrane biogenesis; lipopolysaccharide biosynthesis. The protein is Succinyl-CoA:3-ketoacid coenzyme A transferase subunit A (lpsI) of Xanthomonas campestris pv. campestris (strain B100).